The following is a 1381-amino-acid chain: Hepatocyte growth factor receptor (1381 aa).

A signal peptide spans 1-24; that stretch reads MKAPAVLAPGILVLLFTLVQKSDG. Residues 25–934 are Extracellular-facing; sequence ECKEALVKSE…VQPDQNFTGL (910 aa). The region spanning 27-515 is the Sema domain; that stretch reads KEALVKSEMN…TGKKITKIPL (489 aa). Asparagine 45 carries N-linked (GlcNAc...) asparagine glycosylation. Disulfide bonds link cysteine 95–cysteine 101, cysteine 98–cysteine 160, cysteine 133–cysteine 141, and cysteine 172–cysteine 175. An N-linked (GlcNAc...) asparagine glycan is attached at asparagine 106. Asparagine 202 and asparagine 358 each carry an N-linked (GlcNAc...) asparagine glycan. Disulfide bonds link cysteine 298-cysteine 363 and cysteine 385-cysteine 397. 3 N-linked (GlcNAc...) asparagine glycosylation sites follow: asparagine 399, asparagine 405, and asparagine 449. Disulfide bonds link cysteine 520–cysteine 538, cysteine 526–cysteine 561, cysteine 529–cysteine 545, and cysteine 541–cysteine 551. The N-linked (GlcNAc...) asparagine glycan is linked to asparagine 553. 3 consecutive IPT/TIG domains span residues 563 to 655, 657 to 739, and 742 to 836; these read PTIY…FSYV, PIIT…FSYR, and PIVY…LIYV. The O-linked (Man) threonine glycan is linked to threonine 582. N-linked (GlcNAc...) asparagine glycosylation is found at asparagine 607 and asparagine 635. 2 O-linked (Man) threonine glycosylation sites follow: threonine 676 and threonine 761. N-linked (GlcNAc...) asparagine glycosylation is found at asparagine 785, asparagine 879, and asparagine 930. A helical membrane pass occupies residues 935 to 955; the sequence is IVGVVSISIILLLLLGLFLWL. Residues 956-1381 lie on the Cytoplasmic side of the membrane; the sequence is KRRKQIKDLG…QDNVDGEVDT (426 aa). At serine 966 the chain carries Phosphoserine. Residue threonine 977 is modified to Phosphothreonine. Phosphoserine occurs at positions 990, 997, and 1000. At tyrosine 1003 the chain carries Phosphotyrosine. The Protein kinase domain maps to 1078–1345; sequence VHFNEVIGRG…RISAIFSTFI (268 aa). ATP is bound by residues 1084–1092 and lysine 1110; that span reads IGRGHFGCV. Aspartate 1204 acts as the Proton acceptor in catalysis. An interaction with RANBP9 region spans residues 1212–1381; the sequence is LDEKFTVKVA…QDNVDGEVDT (170 aa). Phosphotyrosine is present on tyrosine 1230. Tyrosine 1234 and tyrosine 1235 each carry phosphotyrosine; by autocatalysis. Position 1289 is a phosphothreonine (threonine 1289). Residues 1320–1359 form an interaction with MUC20 region; that stretch reads WHPKAELRPSFSELVSRISAIFSTFIGEHYVHVNATYVNV. 2 positions are modified to phosphotyrosine; by autocatalysis: tyrosine 1349 and tyrosine 1356. Tyrosine 1365 is subject to Phosphotyrosine.

The protein belongs to the protein kinase superfamily. Tyr protein kinase family. Heterodimer made of an alpha chain (50 kDa) and a beta chain (145 kDa) which are disulfide linked. Binds PLXNB1. Interacts when phosphorylated with downstream effectors including STAT3, PIK3R1, SRC, PCLG1, GRB2 and GAB1. Interacts with SPSB1, SPSB2 and SPSB4. Interacts with INPP5D/SHIP1. When phosphorylated at Tyr-1356, interacts with INPPL1/SHIP2. Interacts with RANBP9 and RANBP10, as well as SPSB1, SPSB2, SPSB3 and SPSB4. SPSB1 binding occurs in the presence and in the absence of HGF, however HGF treatment has a positive effect on this interaction. Interacts with MUC20; prevents interaction with GRB2 and suppresses hepatocyte growth factor-induced cell proliferation. Interacts with GRB10. Interacts with PTPN1 and PTPN2. Interacts with HSP90AA1 and HSP90AB1; the interaction suppresses MET kinase activity. Interacts with tensin TNS3. Interacts (when phosphorylated) with tensin TNS4 (via SH2 domain); the interaction increases MET protein stability by inhibiting MET endocytosis and subsequent lysosomal degradation. Autophosphorylated in response to ligand binding on Tyr-1234 and Tyr-1235 in the kinase domain leading to further phosphorylation of Tyr-1349 and Tyr-1356 in the C-terminal multifunctional docking site. Dephosphorylated by PTPRJ at Tyr-1349 and Tyr-1365. Dephosphorylated by PTPN1 and PTPN2. Post-translationally, ubiquitinated. Ubiquitination by CBL regulates the receptor stability and activity through proteasomal degradation. In terms of processing, O-mannosylation of IPT/TIG domains by TMEM260 is required for protein maturation. O-mannosylated residues are composed of single mannose glycans that are not elongated or modified.

The protein resides in the membrane. The catalysed reaction is L-tyrosyl-[protein] + ATP = O-phospho-L-tyrosyl-[protein] + ADP + H(+). In its inactive state, the C-terminal tail interacts with the catalytic domain and inhibits the kinase activity. Upon ligand binding, the C-terminal tail is displaced and becomes phosphorylated, thus increasing the kinase activity. Functionally, receptor tyrosine kinase that transduces signals from the extracellular matrix into the cytoplasm by binding to hepatocyte growth factor/HGF ligand. Regulates many physiological processes including proliferation, scattering, morphogenesis and survival. Ligand binding at the cell surface induces autophosphorylation of MET on its intracellular domain that provides docking sites for downstream signaling molecules. Following activation by ligand, interacts with the PI3-kinase subunit PIK3R1, PLCG1, SRC, GRB2, STAT3 or the adapter GAB1. Recruitment of these downstream effectors by MET leads to the activation of several signaling cascades including the RAS-ERK, PI3 kinase-AKT, or PLCgamma-PKC. The RAS-ERK activation is associated with the morphogenetic effects while PI3K/AKT coordinates prosurvival effects. During embryonic development, MET signaling plays a role in gastrulation, development and migration of muscles and neuronal precursors, angiogenesis and kidney formation. In adults, participates in wound healing as well as organ regeneration and tissue remodeling. Also promotes differentiation and proliferation of hematopoietic cells. The polypeptide is Hepatocyte growth factor receptor (MET) (Equus caballus (Horse)).